Reading from the N-terminus, the 570-residue chain is Cytoplasmic polyadenylation element-binding protein 2 (570 aa).

Positions 434-516 constitute an RRM domain; it reads LVAFIGGVPR…KRVEIKPYFF (83 aa).

In terms of tissue distribution, expressed specifically in the spermatogenic germ line.

Functionally, cytoplasmic polyadenylation element binding protein that binds to and regulates the translation of specific mRNAs. Not required for oogenesis. This is Cytoplasmic polyadenylation element-binding protein 2 (cpb-2) from Caenorhabditis elegans.